We begin with the raw amino-acid sequence, 96 residues long: Co-chaperonin GroES (96 aa).

It belongs to the GroES chaperonin family. As to quaternary structure, heptamer of 7 subunits arranged in a ring. Interacts with the chaperonin GroEL.

The protein resides in the cytoplasm. Functionally, together with the chaperonin GroEL, plays an essential role in assisting protein folding. The GroEL-GroES system forms a nano-cage that allows encapsulation of the non-native substrate proteins and provides a physical environment optimized to promote and accelerate protein folding. GroES binds to the apical surface of the GroEL ring, thereby capping the opening of the GroEL channel. The protein is Co-chaperonin GroES of Aliivibrio fischeri (strain ATCC 700601 / ES114) (Vibrio fischeri).